Consider the following 29-residue polypeptide: Trypsin inhibitor 2 (29 aa).

Disulfide bonds link Cys3-Cys20, Cys10-Cys22, and Cys16-Cys28.

It belongs to the protease inhibitor I7 (squash-type serine protease inhibitor) family.

The protein resides in the secreted. In terms of biological role, inhibits trypsin. The polypeptide is Trypsin inhibitor 2 (Bryonia dioica (Red bryony)).